A 227-amino-acid chain; its full sequence is MDRDRTTGWMEVICGSMFSGKTEELIRRLRRARIARQHTRVFKPALDERYSEDEVVSHNENSVTTTPVEAPPQIQELVQEADVVGIDEAQFFDDDLVPTCQALAEDGHRVIVVGLDTDYRAEPFDPMPQLMAVAEHVTKLHAVCVVCGAPANHSQRIVPGEDRVLVGATEAYEPRCRACFEPEPVTVTRPRPHTEALRAVATDDADASTNEADPEAADAASADGTAA.

ATP contacts are provided by residues 15–22 (GSMFSGKT) and 87–90 (DEAQ). The active-site Proton acceptor is Glu-88. Zn(2+) contacts are provided by Cys-144, Cys-147, Cys-176, and Cys-179. Residues 198–227 (RAVATDDADASTNEADPEAADAASADGTAA) are disordered. Over residues 217-227 (ADAASADGTAA) the composition is skewed to low complexity.

Belongs to the thymidine kinase family. As to quaternary structure, homotetramer.

Its subcellular location is the cytoplasm. It catalyses the reaction thymidine + ATP = dTMP + ADP + H(+). In Salinibacter ruber (strain DSM 13855 / M31), this protein is Thymidine kinase.